Reading from the N-terminus, the 138-residue chain is Large ribosomal subunit protein eL14A (138 aa).

Position 2 is an N-acetylserine (Ser2).

This sequence belongs to the eukaryotic ribosomal protein eL14 family. As to quaternary structure, component of the large ribosomal subunit (LSU). Mature yeast ribosomes consist of a small (40S) and a large (60S) subunit. The 40S small subunit contains 1 molecule of ribosomal RNA (18S rRNA) and 33 different proteins (encoded by 57 genes). The large 60S subunit contains 3 rRNA molecules (25S, 5.8S and 5S rRNA) and 46 different proteins (encoded by 81 genes). In terms of processing, N-terminally acetylated by acetyltransferase NatA.

The protein localises to the cytoplasm. Its function is as follows. Component of the ribosome, a large ribonucleoprotein complex responsible for the synthesis of proteins in the cell. The small ribosomal subunit (SSU) binds messenger RNAs (mRNAs) and translates the encoded message by selecting cognate aminoacyl-transfer RNA (tRNA) molecules. The large subunit (LSU) contains the ribosomal catalytic site termed the peptidyl transferase center (PTC), which catalyzes the formation of peptide bonds, thereby polymerizing the amino acids delivered by tRNAs into a polypeptide chain. The nascent polypeptides leave the ribosome through a tunnel in the LSU and interact with protein factors that function in enzymatic processing, targeting, and the membrane insertion of nascent chains at the exit of the ribosomal tunnel. The protein is Large ribosomal subunit protein eL14A of Saccharomyces cerevisiae (strain ATCC 204508 / S288c) (Baker's yeast).